The primary structure comprises 325 residues: 4-diphosphocytidyl-2-C-methyl-D-erythritol kinase (325 aa).

Lys-22 is a catalytic residue. Position 110–120 (110–120) interacts with ATP; that stretch reads PVAGGMAGGSA. Asp-152 is an active-site residue. Positions 306-325 are disordered; that stretch reads PAPGARVLEAVSTPSPGGRS.

The protein belongs to the GHMP kinase family. IspE subfamily.

The catalysed reaction is 4-CDP-2-C-methyl-D-erythritol + ATP = 4-CDP-2-C-methyl-D-erythritol 2-phosphate + ADP + H(+). It functions in the pathway isoprenoid biosynthesis; isopentenyl diphosphate biosynthesis via DXP pathway; isopentenyl diphosphate from 1-deoxy-D-xylulose 5-phosphate: step 3/6. In terms of biological role, catalyzes the phosphorylation of the position 2 hydroxy group of 4-diphosphocytidyl-2C-methyl-D-erythritol. This is 4-diphosphocytidyl-2-C-methyl-D-erythritol kinase from Kineococcus radiotolerans (strain ATCC BAA-149 / DSM 14245 / SRS30216).